The chain runs to 132 residues: Small ribosomal subunit protein uS8 (132 aa).

This sequence belongs to the universal ribosomal protein uS8 family. As to quaternary structure, part of the 30S ribosomal subunit. Contacts proteins S5 and S12.

Functionally, one of the primary rRNA binding proteins, it binds directly to 16S rRNA central domain where it helps coordinate assembly of the platform of the 30S subunit. The chain is Small ribosomal subunit protein uS8 from Rickettsia typhi (strain ATCC VR-144 / Wilmington).